Here is a 196-residue protein sequence, read N- to C-terminus: MEISQAEWVRDTFIDHRYAQGYFLMGAGDRLEWYTSRQRALIPLDERFRYPASLRRVLNQNRFQVAINRDFSAVVEGCADRPMTWITPRLKEVYHLLYATGWAVSFETWQGDELAGGILGIVIGGAFIGESMFYRIPNGSKVAMVKLVEHLRQRGFLLFDAQLQNPHLERFGAYVVSPRKYRQLLAQAIRKPCQFL.

Belongs to the L/F-transferase family.

The protein resides in the cytoplasm. The enzyme catalyses N-terminal L-lysyl-[protein] + L-leucyl-tRNA(Leu) = N-terminal L-leucyl-L-lysyl-[protein] + tRNA(Leu) + H(+). The catalysed reaction is N-terminal L-arginyl-[protein] + L-leucyl-tRNA(Leu) = N-terminal L-leucyl-L-arginyl-[protein] + tRNA(Leu) + H(+). It catalyses the reaction L-phenylalanyl-tRNA(Phe) + an N-terminal L-alpha-aminoacyl-[protein] = an N-terminal L-phenylalanyl-L-alpha-aminoacyl-[protein] + tRNA(Phe). Functions in the N-end rule pathway of protein degradation where it conjugates Leu, Phe and, less efficiently, Met from aminoacyl-tRNAs to the N-termini of proteins containing an N-terminal arginine or lysine. This chain is Leucyl/phenylalanyl-tRNA--protein transferase, found in Thermosynechococcus vestitus (strain NIES-2133 / IAM M-273 / BP-1).